Consider the following 284-residue polypeptide: MSHRFSVLPQYLLPKQALTAFAGFVASRERGWITTEIIRRFVAKYQVNMEEAARSDIASYLTFNDFFTRALKPGVRPLADADLISPVDGAISQFGRIEHDQIFQAKGHHYSTTALVGGDAALAAQFQNGSFATLYLSPKDYHRIHMPCDGRLARMVHVPGELFSVNPVTARGVPGLFARNERVVCVFDSPRGPFVLILVGATIVGSMATVWHGVVNPPRGKQVRAWDYDPNAEAAVVLRRGEEMGRFLLGSTVVMLFPAGPLHFNPDWAPGRLIRLGEAMANYA.

Catalysis depends on charge relay system; for autoendoproteolytic cleavage activity residues D88, H145, and S251. Catalysis depends on S251, which acts as the Schiff-base intermediate with substrate; via pyruvic acid; for decarboxylase activity. At S251 the chain carries Pyruvic acid (Ser); by autocatalysis.

This sequence belongs to the phosphatidylserine decarboxylase family. PSD-B subfamily. Prokaryotic type I sub-subfamily. As to quaternary structure, heterodimer of a large membrane-associated beta subunit and a small pyruvoyl-containing alpha subunit. Pyruvate is required as a cofactor. In terms of processing, is synthesized initially as an inactive proenzyme. Formation of the active enzyme involves a self-maturation process in which the active site pyruvoyl group is generated from an internal serine residue via an autocatalytic post-translational modification. Two non-identical subunits are generated from the proenzyme in this reaction, and the pyruvate is formed at the N-terminus of the alpha chain, which is derived from the carboxyl end of the proenzyme. The autoendoproteolytic cleavage occurs by a canonical serine protease mechanism, in which the side chain hydroxyl group of the serine supplies its oxygen atom to form the C-terminus of the beta chain, while the remainder of the serine residue undergoes an oxidative deamination to produce ammonia and the pyruvoyl prosthetic group on the alpha chain. During this reaction, the Ser that is part of the protease active site of the proenzyme becomes the pyruvoyl prosthetic group, which constitutes an essential element of the active site of the mature decarboxylase.

The protein resides in the cell membrane. The enzyme catalyses a 1,2-diacyl-sn-glycero-3-phospho-L-serine + H(+) = a 1,2-diacyl-sn-glycero-3-phosphoethanolamine + CO2. The protein operates within phospholipid metabolism; phosphatidylethanolamine biosynthesis; phosphatidylethanolamine from CDP-diacylglycerol: step 2/2. In terms of biological role, catalyzes the formation of phosphatidylethanolamine (PtdEtn) from phosphatidylserine (PtdSer). The polypeptide is Phosphatidylserine decarboxylase proenzyme (Polaromonas sp. (strain JS666 / ATCC BAA-500)).